A 363-amino-acid polypeptide reads, in one-letter code: GDP-fucose transporter 1 (363 aa).

Transmembrane regions (helical) follow at residues 33-55, 75-97, 110-129, 139-161, 166-184, 194-213, 226-248, and 263-285; these read FLLRALQIALVVSLYWVTSISMV, VTFYQCLVTSLLCKGLSTLATCC, LKVARSVLPLSVVFIGMITF, VPFYNVGRSLTTVFNVLLSYLLL, SFYALLTCGVIIGGFWLGI, SLTGTIFGVLASLCVSLNAI, IWRLTFYNNVNACVLFLPLMIVL, and AHFWLMMTLGGLFGFAIGYVTGL.

This sequence belongs to the TPT transporter family. SLC35C subfamily.

The protein localises to the golgi apparatus membrane. It carries out the reaction GMP(out) + GDP-beta-L-fucose(in) = GMP(in) + GDP-beta-L-fucose(out). Functionally, antiporter specific for GDP-l-fucose and depending on the concomitant reverse transport of GMP. Involved in GDP-fucose import from the cytoplasm into the Golgi lumen. This chain is GDP-fucose transporter 1 (Slc35c1), found in Mus musculus (Mouse).